Here is a 201-residue protein sequence, read N- to C-terminus: NAD(P)H quinone oxidoreductase PST2 (201 aa).

The 187-residue stretch at 6–192 (VAIIIYSLYH…SIAQQQGEDF (187 aa)) folds into the Flavodoxin-like domain. Residues 12–16 (SLYHH) and 112–164 (VFVS…SPWG) each bind FMN.

It belongs to the WrbA family. Requires FMN as cofactor.

The protein localises to the cell membrane. The catalysed reaction is a quinone + NADH + H(+) = a quinol + NAD(+). It carries out the reaction a quinone + NADPH + H(+) = a quinol + NADP(+). Functionally, flavodoxin-like protein (FLP) that plays a role in cell wall integrity, oxidative stress protection and virulence. FLPs act as NAD(P)H quinone oxidoreductases. Reduces ubiquinone (coenzyme Q), enabling it to serve as an antioxidant in the membrane. In Candida albicans (strain SC5314 / ATCC MYA-2876) (Yeast), this protein is NAD(P)H quinone oxidoreductase PST2.